The sequence spans 266 residues: RNA-binding protein 7 (266 aa).

N-acetylglycine is present on Gly-2. The RRM domain occupies 10 to 87 (RTLFVGNLET…RPIKIQFRSG (78 aa)). ZCCHC8 binding stretches follow at residues 25-35 (LLFELFHQAGP) and 59-76 (HEVSVPYAMNLLNGIKLY). The segment covering 90–115 (HAPQDVSLSYPQHHVGNSSPTSTSPS) has biased composition (polar residues). The tract at residues 90–118 (HAPQDVSLSYPQHHVGNSSPTSTSPSRYE) is disordered. Ser-136 and Ser-137 each carry phosphoserine. Position 152 is an omega-N-methylarginine (Arg-152). The interval 162-266 (SSPLDQSGFS…RDGKWRSSRH (105 aa)) is disordered. Positions 173–188 (SVQSHSHSFNQSSSSQ) are enriched in low complexity. Position 204 is a phosphoserine (Ser-204). A compositionally biased stretch (basic and acidic residues) spans 209–266 (ADRHYSREQRYTDHGSDHHYRGKRDDFFYEDRNHDDWSHDYDNRRDSSRDGKWRSSRH).

Component of the nuclear exosome targeting (NEXT) complex composed of MTREX, ZCCHC8, and RBM7 that directs a subset of non-coding short-lived RNAs for exosomal degradation. Interacts with ZCCHC8 and SF3B2/SAP145. Binds to MTREX through ZCCHC8. Interacts with YWHAE and YWHAZ; these interactions are stress-dependent and RBM7 phosphorylation dependent; release RNA from the NEXT complex and may affect RNA targeting to the nuclear RNA exosomome for degradation. Interacts with MEPCE and LARP7, the core subunits of 7SK snRNP; upon genotoxic stress this interaction is enhanced, triggering the release of inactive P-TEFb complex from the core and P-TEFb complex activation. In terms of processing, phosphorylated at Ser-136 by MAPK14/p38-alpha-activated MAPKAPK2/MK2; this phosphorylation is stress-dependent; this phosphorylation decreases its RNA-binding capacity therefore affecting RNA nuclear exosome-mediated degradation. This phosphorylation mediates YWHAE and YWHAZ interactions. As to expression, ubiquitous.

It localises to the nucleus. It is found in the nucleoplasm. In terms of biological role, RNA-binding subunit of the trimeric nuclear exosome targeting (NEXT) complex, a complex that functions as an RNA exosome cofactor that directs a subset of non-coding short-lived RNAs for exosomal degradation. NEXT is involved in surveillance and turnover of aberrant transcripts and non-coding RNAs. Binds preferentially polyuridine sequences and associates with newly synthesized RNAs, including pre-mRNAs and short-lived exosome substrates such as promoter upstream transcripts (PROMPTs), enhancer RNAs (eRNAs), and 3'-extended products from small nuclear RNAs (snRNAs). Participates in several biological processes including DNA damage response (DDR) and stress response. During stress response, activation of the p38MAPK-MK2 pathway decreases RBM7-RNA-binding and subsequently the RNA exosome degradation activities, thereby modulating the turnover of non-coding transcriptome. Participates in DNA damage response (DDR), through its interaction with MEPCE and LARP7, the core subunits of 7SK snRNP complex, that release the positive transcription elongation factor b (P-TEFb) complex from the 7SK snRNP. In turn, activation of P-TEFb complex induces the transcription of P-TEFb-dependent DDR genes to promote cell viability. In Homo sapiens (Human), this protein is RNA-binding protein 7.